The sequence spans 353 residues: Inactive ADP-ribosyltransferase ARH2 (353 aa).

Ser-27 bears the Phosphoserine mark.

Belongs to the ADP-ribosylglycohydrolase family. Expressed in the embryonic heart at E11.5.

Its subcellular location is the cytoplasm. The protein resides in the myofibril. It is found in the sarcomere. Its function is as follows. Required for myofibril assembly and outgrowth of the cardiac chambers in the developing heart. Appears to be catalytically inactive, showing no activity against O-acetyl-ADP-ribose. The chain is Inactive ADP-ribosyltransferase ARH2 (Adprhl1) from Mus musculus (Mouse).